The chain runs to 264 residues: S-adenosylmethionine decarboxylase proenzyme (264 aa).

Catalysis depends on S112, which acts as the Schiff-base intermediate with substrate; via pyruvic acid. Residue S112 is modified to Pyruvic acid (Ser); by autocatalysis. Residue H117 is the Proton acceptor; for processing activity of the active site. The active-site Proton donor; for catalytic activity is the C140.

Belongs to the prokaryotic AdoMetDC family. Type 2 subfamily. As to quaternary structure, heterooctamer of four alpha and four beta chains arranged as a tetramer of alpha/beta heterodimers. Pyruvate is required as a cofactor. Post-translationally, is synthesized initially as an inactive proenzyme. Formation of the active enzyme involves a self-maturation process in which the active site pyruvoyl group is generated from an internal serine residue via an autocatalytic post-translational modification. Two non-identical subunits are generated from the proenzyme in this reaction, and the pyruvate is formed at the N-terminus of the alpha chain, which is derived from the carboxyl end of the proenzyme. The post-translation cleavage follows an unusual pathway, termed non-hydrolytic serinolysis, in which the side chain hydroxyl group of the serine supplies its oxygen atom to form the C-terminus of the beta chain, while the remainder of the serine residue undergoes an oxidative deamination to produce ammonia and the pyruvoyl group blocking the N-terminus of the alpha chain.

The catalysed reaction is S-adenosyl-L-methionine + H(+) = S-adenosyl 3-(methylsulfanyl)propylamine + CO2. The protein operates within amine and polyamine biosynthesis; S-adenosylmethioninamine biosynthesis; S-adenosylmethioninamine from S-adenosyl-L-methionine: step 1/1. In terms of biological role, catalyzes the decarboxylation of S-adenosylmethionine to S-adenosylmethioninamine (dcAdoMet), the propylamine donor required for the synthesis of the polyamines spermine and spermidine from the diamine putrescine. In Yersinia pseudotuberculosis serotype I (strain IP32953), this protein is S-adenosylmethionine decarboxylase proenzyme.